Consider the following 102-residue polypeptide: Spexin prohormone 1 (102 aa).

Residues 1–26 (MKDLRTLAAYALALLLLATFVSYSRS) form the signal peptide. A propeptide spanning residues 27-35 (APMGSFQRR) is cleaved from the precursor. Glutamine amide is present on glutamine 49. Positions 50–102 (GRRFVSEDRNEGDLYDTIRLESQSQNTENLSISKAAAFLLNVLQQARDEGEPY) are excised as a propeptide.

It belongs to the spexin family. Expressed in the anterior hypothalamus, ventromedial thalamic nucleus and medial longitudinal fasciculus of the brain (at protein level). Widely expressed. Expressed predominantly in the spleen, kidney, liver and testis. Expressed in olfactory bulb, pituitary, telencephalon, diencephalons, spinal cord, optic tectum, cerebellum and hypothalamus of the brain.

It localises to the secreted. It is found in the extracellular space. The protein resides in the cytoplasmic vesicle. The protein localises to the secretory vesicle. Functionally, plays a role in the regulation of food intake and body weight and in reproduction. May also play a role as a central modulator of cardiovascular and renal function and nociception. Its function is as follows. Brain administration of the peptide inhibits food consumption. May function as a satiety factor for feeding control. Involved in the negative regulation of the reproductive axis by inhibiting luteinizing hormone secretion from pituitary cells. The sequence is that of Spexin prohormone 1 (spx) from Carassius auratus (Goldfish).